The chain runs to 152 residues: UPF0266 membrane protein CKO_01158 (152 aa).

Transmembrane regions (helical) follow at residues 6 to 26 (LVLV…QFIM), 45 to 65 (VDSV…VTSH), and 67 to 87 (AQIT…IFWV).

This sequence belongs to the UPF0266 family.

Its subcellular location is the cell inner membrane. In Citrobacter koseri (strain ATCC BAA-895 / CDC 4225-83 / SGSC4696), this protein is UPF0266 membrane protein CKO_01158.